A 156-amino-acid chain; its full sequence is CD-NTase-associated protein 8 (156 aa).

The protein belongs to the bacterial HORMA family. HORMA3 subfamily. In terms of assembly, interacts with Cap7 (also called HORMA2) and CdnC; forms CdnD:Cap7:Cap8 (also called CdnD:HORMA2:HORMA3) complexes with stoichiometries of 1:1:1 and 2:1:1.

CBASS (cyclic oligonucleotide-based antiphage signaling system) provides immunity against bacteriophage. The CD-NTase protein synthesizes cyclic nucleotides in response to infection; these serve as specific second messenger signals. The signals activate a diverse range of effectors, leading to bacterial cell death and thus abortive phage infection. A type III-C(AAA) CBASS system. Its function is as follows. A member of the CBASS system in this bacteria. It does not seem to bind a closure peptide, its exact function is unknown. This is CD-NTase-associated protein 8 from Pseudomonas aeruginosa.